The primary structure comprises 414 residues: Gamma-glutamyl phosphate reductase (414 aa).

The protein belongs to the gamma-glutamyl phosphate reductase family.

The protein resides in the cytoplasm. The enzyme catalyses L-glutamate 5-semialdehyde + phosphate + NADP(+) = L-glutamyl 5-phosphate + NADPH + H(+). The protein operates within amino-acid biosynthesis; L-proline biosynthesis; L-glutamate 5-semialdehyde from L-glutamate: step 2/2. In terms of biological role, catalyzes the NADPH-dependent reduction of L-glutamate 5-phosphate into L-glutamate 5-semialdehyde and phosphate. The product spontaneously undergoes cyclization to form 1-pyrroline-5-carboxylate. This is Gamma-glutamyl phosphate reductase from Xanthomonas oryzae pv. oryzae (strain KACC10331 / KXO85).